The primary structure comprises 458 residues: Sugar transporter ERD6-like 10 (458 aa).

12 helical membrane passes run 17–37 (ITAC…SYGC), 66–86 (FLNL…VILG), 96–116 (LFCI…WLDL), 119–139 (ISLG…IAEI), 150–170 (ASTL…GTVI), 174–194 (VLAV…YFIP), 257–277 (LVVG…GITY), 292–312 (LGSM…LILV), 319–339 (PLLL…GVSF), 350–370 (FIPV…AIGI), 393–413 (IVAL…NFMF), and 419–439 (GTFY…WMLV).

This sequence belongs to the major facilitator superfamily. Sugar transporter (TC 2.A.1.1) family.

It localises to the membrane. In terms of biological role, sugar transporter. The polypeptide is Sugar transporter ERD6-like 10 (Arabidopsis thaliana (Mouse-ear cress)).